A 109-amino-acid polypeptide reads, in one-letter code: Protein reprimo (109 aa).

Residues Asn-7 and Asn-18 are each glycosylated (N-linked (GlcNAc...) asparagine). A helical membrane pass occupies residues 56-76 (VVQIAVMCVLSLTVVFGIFFL). Ser-98 carries the phosphoserine modification.

The protein belongs to the reprimo family.

Its subcellular location is the cytoplasm. The protein localises to the membrane. Functionally, may be involved in the regulation of p53-dependent G2 arrest of the cell cycle. Seems to induce cell cycle arrest by inhibiting CDK1 activity and nuclear translocation of the CDC2 cyclin B1 complex. The protein is Protein reprimo (Rprm) of Rattus norvegicus (Rat).